Reading from the N-terminus, the 508-residue chain is Lysine--tRNA ligase (508 aa).

Residues Glu416 and Glu423 each contribute to the Mg(2+) site.

The protein belongs to the class-II aminoacyl-tRNA synthetase family. In terms of assembly, homodimer. Requires Mg(2+) as cofactor.

Its subcellular location is the cytoplasm. The enzyme catalyses tRNA(Lys) + L-lysine + ATP = L-lysyl-tRNA(Lys) + AMP + diphosphate. The polypeptide is Lysine--tRNA ligase (Prochlorococcus marinus (strain MIT 9313)).